The sequence spans 246 residues: Auxin-responsive protein IAA25 (246 aa).

The segment at 1–22 is disordered; the sequence is MKSSSVAPRLKQERQDDCKFQE. The span at 10–22 shows a compositional bias: basic and acidic residues; that stretch reads LKQERQDDCKFQE. The EAR-like (transcriptional repression) motif lies at 28 to 32; that stretch reads LELRL. Residues 143-238 form the PB1 domain; the sequence is TMFVKVNLEG…SVKRLYIAQD (96 aa).

This sequence belongs to the Aux/IAA family. As to quaternary structure, homodimers and heterodimers. As to expression, highly expressed in flowers. Expressed in roots and seedlings.

It is found in the nucleus. Aux/IAA proteins are short-lived transcriptional factors that function as repressors of early auxin response genes at low auxin concentrations. The polypeptide is Auxin-responsive protein IAA25 (IAA25) (Oryza sativa subsp. japonica (Rice)).